The primary structure comprises 489 residues: 3-octaprenyl-4-hydroxybenzoate carboxy-lyase (489 aa).

Asn-172 serves as a coordination point for Mn(2+). Prenylated FMN is bound by residues Ile-175 to Arg-177, Arg-189 to Leu-191, and Arg-194 to Gly-195. Glu-238 is a binding site for Mn(2+). Asp-287 acts as the Proton donor in catalysis.

This sequence belongs to the UbiD family. In terms of assembly, homohexamer. Requires prenylated FMN as cofactor. The cofactor is Mn(2+).

The protein resides in the cell membrane. The enzyme catalyses a 4-hydroxy-3-(all-trans-polyprenyl)benzoate + H(+) = a 2-(all-trans-polyprenyl)phenol + CO2. The protein operates within cofactor biosynthesis; ubiquinone biosynthesis. Its function is as follows. Catalyzes the decarboxylation of 3-octaprenyl-4-hydroxy benzoate to 2-octaprenylphenol, an intermediate step in ubiquinone biosynthesis. The sequence is that of 3-octaprenyl-4-hydroxybenzoate carboxy-lyase from Tolumonas auensis (strain DSM 9187 / NBRC 110442 / TA 4).